We begin with the raw amino-acid sequence, 472 residues long: Cannabinoid receptor 1 (472 aa).

The Extracellular segment spans residues 1-116; that stretch reads MKSILDGLAD…CFMVLNPSQQ (116 aa). The interval 2–23 is required for mitochondrial localization; it reads KSILDGLADTTFRTITTDLLYV. 2 N-linked (GlcNAc...) asparagine glycosylation sites follow: N77 and N83. Residues 117 to 142 form a helical membrane-spanning segment; it reads LAIAVLSLTLGTFTVLENLLVLCVIL. Residues 143–154 are Cytoplasmic-facing; it reads HSRSLRCRPSYH. Residues 155–175 form a helical membrane-spanning segment; it reads FIGSLAVADLLGSVIFVYSFI. Residues 176 to 187 lie on the Extracellular side of the membrane; it reads DFHVFHRKDSRN. A helical transmembrane segment spans residues 188–212; the sequence is VFLFKLGGVTASFTASVGSLFLTAI. At 213 to 232 the chain is on the cytoplasmic side; that stretch reads DRYISIHRPLAYKRIVTRPK. Residues 233 to 255 form a helical membrane-spanning segment; it reads AVVAFCLMWTIAIVIAVLPLLGW. Over 256 to 273 the chain is Extracellular; sequence NCEKLQSVCSDIFPHIDE. Residues 274-299 traverse the membrane as a helical segment; that stretch reads TYLMFWIGVTSVLLLFIVYAYMYILW. At 300–344 the chain is on the cytoplasmic side; it reads KAHSHAVRMIQRGTQKSIIIHTSEDGKVQVTRPDQARMDIRLAKT. Residues 345-365 form a helical membrane-spanning segment; it reads LVLILVVLIICWGPLLAIMVY. Residues 366-377 lie on the Extracellular side of the membrane; the sequence is DVFGKMNKLIKT. Residues 378 to 399 traverse the membrane as a helical segment; sequence VFAFCSMLCLLNSTVNPIIYAL. The Cytoplasmic segment spans residues 400–472; that stretch reads RSKDLRHAFR…VSTDTSAEAL (73 aa). C415 is lipidated: S-palmitoyl cysteine. Residues S425 and S429 each carry the phosphoserine modification.

It belongs to the G-protein coupled receptor 1 family. As to quaternary structure, interacts (via C-terminus) with CNRIP1; this interaction attenuates constitutive, but not agonist-dependent, inhibition of voltage-gated Ca(2+) channels in neurons. Associates with G protein alpha subunits, including G(i) alpha-1/GNAI1, G(i) alpha-3/GNAI3 and G(o)-alpha/GNAO1; palmitoylation is important for interaction with GNAI3 and GNAO1. Palmitoylation at Cys-415 is important for recruitment at plasma membrane and lipid rafts and association with G protein alpha subunits. In terms of tissue distribution, widely expressed, with highest levels in fetal and adult brain. Expression levels of isoform 2 and isoform 3 are much lower than those of isoform 1.

Its subcellular location is the cell membrane. It localises to the membrane raft. The protein localises to the mitochondrion outer membrane. The protein resides in the cell projection. It is found in the axon. Its subcellular location is the presynapse. Its activity is regulated as follows. Hemopressin, a peptide derived from hemoglobin subunit alpha (HBA1 and/or HBA2), acts as an antagonist peptide: hemopressin-binding efficiently blocks cannabinoid receptor CNR1 and subsequent signaling. Functionally, G-protein coupled receptor for endogenous cannabinoids (eCBs), including N-arachidonoylethanolamide (also called anandamide or AEA) and 2-arachidonoylglycerol (2-AG), as well as phytocannabinoids, such as delta(9)-tetrahydrocannabinol (THC). Mediates many cannabinoid-induced effects, acting, among others, on food intake, memory loss, gastrointestinal motility, catalepsy, ambulatory activity, anxiety, chronic pain. Signaling typically involves reduction in cyclic AMP. In the hypothalamus, may have a dual effect on mitochondrial respiration depending upon the agonist dose and possibly upon the cell type. Increases respiration at low doses, while decreases respiration at high doses. At high doses, CNR1 signal transduction involves G-protein alpha-i protein activation and subsequent inhibition of mitochondrial soluble adenylate cyclase, decrease in cyclic AMP concentration, inhibition of protein kinase A (PKA)-dependent phosphorylation of specific subunits of the mitochondrial electron transport system, including NDUFS2. In the hypothalamus, inhibits leptin-induced reactive oxygen species (ROS) formation and mediates cannabinoid-induced increase in SREBF1 and FASN gene expression. In response to cannabinoids, drives the release of orexigenic beta-endorphin, but not that of melanocyte-stimulating hormone alpha/alpha-MSH, from hypothalamic POMC neurons, hence promoting food intake. In the hippocampus, regulates cellular respiration and energy production in response to cannabinoids. Involved in cannabinoid-dependent depolarization-induced suppression of inhibition (DSI), a process in which depolarization of CA1 postsynaptic pyramidal neurons mobilizes eCBs, which retrogradely activate presynaptic CB1 receptors, transiently decreasing GABAergic inhibitory neurotransmission. Also reduces excitatory synaptic transmission. In superior cervical ganglions and cerebral vascular smooth muscle cells, inhibits voltage-gated Ca(2+) channels in a constitutive, as well as agonist-dependent manner. In cerebral vascular smooth muscle cells, cannabinoid-induced inhibition of voltage-gated Ca(2+) channels leads to vasodilation and decreased vascular tone. Induces leptin production in adipocytes and reduces LRP2-mediated leptin clearance in the kidney, hence participating in hyperleptinemia. In adipose tissue, CNR1 signaling leads to increased expression of SREBF1, ACACA and FASN genes. In the liver, activation by endocannabinoids leads to increased de novo lipogenesis and reduced fatty acid catabolism, associated with increased expression of SREBF1/SREBP-1, GCK, ACACA, ACACB and FASN genes. May also affect de novo cholesterol synthesis and HDL-cholesteryl ether uptake. Peripherally modulates energy metabolism. In high carbohydrate diet-induced obesity, may decrease the expression of mitochondrial dihydrolipoyl dehydrogenase/DLD in striated muscles, as well as that of selected glucose/ pyruvate metabolic enzymes, hence affecting energy expenditure through mitochondrial metabolism. In response to cannabinoid anandamide, elicits a pro-inflammatory response in macrophages, which involves NLRP3 inflammasome activation and IL1B and IL18 secretion. In macrophages infiltrating pancreatic islets, this process may participate in the progression of type-2 diabetes and associated loss of pancreatic beta-cells. In terms of biological role, binds both 2-arachidonoylglycerol (2-AG) and anandamide. Only binds 2-arachidonoylglycerol (2-AG) with high affinity. Contrary to its effect on isoform 1, 2-AG behaves as an inverse agonist on isoform 2 in assays measuring GTP binding to membranes. Its function is as follows. Only binds 2-arachidonoylglycerol (2-AG) with high affinity. Contrary to its effect on isoform 1, 2-AG behaves as an inverse agonist on isoform 3 in assays measuring GTP binding to membranes. This Homo sapiens (Human) protein is Cannabinoid receptor 1 (CNR1).